The sequence spans 194 residues: Peptidyl-tRNA hydrolase (194 aa).

Residue tyrosine 16 participates in tRNA binding. Histidine 21 (proton acceptor) is an active-site residue. Residues phenylalanine 67, asparagine 69, and asparagine 115 each coordinate tRNA.

The protein belongs to the PTH family. In terms of assembly, monomer.

The protein resides in the cytoplasm. The catalysed reaction is an N-acyl-L-alpha-aminoacyl-tRNA + H2O = an N-acyl-L-amino acid + a tRNA + H(+). Functionally, hydrolyzes ribosome-free peptidyl-tRNAs (with 1 or more amino acids incorporated), which drop off the ribosome during protein synthesis, or as a result of ribosome stalling. Its function is as follows. Catalyzes the release of premature peptidyl moieties from peptidyl-tRNA molecules trapped in stalled 50S ribosomal subunits, and thus maintains levels of free tRNAs and 50S ribosomes. In Salmonella dublin (strain CT_02021853), this protein is Peptidyl-tRNA hydrolase.